The primary structure comprises 205 residues: Probable GTP-binding protein EngB (205 aa).

The region spanning 27 to 201 is the EngB-type G domain; it reads SGIEIAFAGR…AAKLDSWFAP (175 aa). GTP contacts are provided by residues 35–42, 62–66, 80–83, 147–150, and 180–182; these read GRSNAGKS, GRTQL, DLPG, TKAD, and FSA. Mg(2+)-binding residues include S42 and T64.

This sequence belongs to the TRAFAC class TrmE-Era-EngA-EngB-Septin-like GTPase superfamily. EngB GTPase family. Mg(2+) serves as cofactor.

Its function is as follows. Necessary for normal cell division and for the maintenance of normal septation. This Pasteurella multocida (strain Pm70) protein is Probable GTP-binding protein EngB.